The chain runs to 538 residues: Casein kinase I homolog 1 (538 aa).

A disordered region spans residues 39–61 (SPARSSMTATTAANSNSNSSRDD). The span at 41–57 (ARSSMTATTAANSNSNS) shows a compositional bias: low complexity. The Protein kinase domain maps to 69–353 (YKIGKKIGEG…ETADGQYDWM (285 aa)). Residues 75–83 (IGEGSFGVL) and lysine 98 contribute to the ATP site. Aspartate 188 acts as the Proton acceptor in catalysis. Disordered regions lie at residues 366–428 (NKKP…KPKL) and 474–527 (QQQL…LAAS). 2 stretches are compositionally biased toward low complexity: residues 391-410 (QLQMQQLQMQQLQQQQQQQQ) and 474-498 (QQQLRATGQPPSQPQAQTQSQQFGA). A phosphoserine mark is found at serine 522, serine 523, and serine 527. Residues cysteine 537 and cysteine 538 are each lipidated (S-palmitoyl cysteine).

This sequence belongs to the protein kinase superfamily. CK1 Ser/Thr protein kinase family. Casein kinase I subfamily. Palmitoylated by AKR1.

The protein localises to the cell membrane. It is found in the mitochondrion membrane. The catalysed reaction is L-seryl-[protein] + ATP = O-phospho-L-seryl-[protein] + ADP + H(+). The enzyme catalyses L-threonyl-[protein] + ATP = O-phospho-L-threonyl-[protein] + ADP + H(+). Casein kinases are operationally defined by their preferential utilization of acidic proteins such as caseins as substrates. This Saccharomyces cerevisiae (strain ATCC 204508 / S288c) (Baker's yeast) protein is Casein kinase I homolog 1 (YCK1).